Here is a 277-residue protein sequence, read N- to C-terminus: Phosphoenolpyruvate synthase regulatory protein (277 aa).

157–164 (GVSRCGKT) contacts ADP.

Belongs to the pyruvate, phosphate/water dikinase regulatory protein family. PSRP subfamily.

The catalysed reaction is [pyruvate, water dikinase] + ADP = [pyruvate, water dikinase]-phosphate + AMP + H(+). It catalyses the reaction [pyruvate, water dikinase]-phosphate + phosphate + H(+) = [pyruvate, water dikinase] + diphosphate. Its function is as follows. Bifunctional serine/threonine kinase and phosphorylase involved in the regulation of the phosphoenolpyruvate synthase (PEPS) by catalyzing its phosphorylation/dephosphorylation. In Salmonella agona (strain SL483), this protein is Phosphoenolpyruvate synthase regulatory protein.